The following is a 309-amino-acid chain: Malate dehydrogenase (309 aa).

NAD(+)-binding positions include 6 to 11 and Asp-31; that span reads GSGRVG. 2 residues coordinate substrate: Arg-80 and Arg-86. NAD(+) is bound by residues Asn-93 and 116–118; that span reads TTN. Positions 118 and 149 each coordinate substrate. The active-site Proton acceptor is His-173.

Belongs to the LDH/MDH superfamily. As to quaternary structure, homotetramer.

It catalyses the reaction (S)-malate + NAD(+) = oxaloacetate + NADH + H(+). Its function is as follows. Catalyzes the reversible oxidation of malate to oxaloacetate. Exhibits higher specific activity for oxaloacetate reduction than for malate oxidation in vitro. Has a strong preference for NAD. Can use NADPH for oxaloacetate reduction, but activity decreases more than 90%. No activity detected with NADP(+) and malate. The chain is Malate dehydrogenase from Pyrobaculum islandicum (strain DSM 4184 / JCM 9189 / GEO3).